A 121-amino-acid chain; its full sequence is Aspartate 1-decarboxylase (121 aa).

Serine 25 acts as the Schiff-base intermediate with substrate; via pyruvic acid in catalysis. The residue at position 25 (serine 25) is a Pyruvic acid (Ser). Threonine 57 contributes to the substrate binding site. Tyrosine 58 functions as the Proton donor in the catalytic mechanism. Residue 73–75 (GAA) coordinates substrate.

This sequence belongs to the PanD family. As to quaternary structure, heterooctamer of four alpha and four beta subunits. The cofactor is pyruvate. In terms of processing, is synthesized initially as an inactive proenzyme, which is activated by self-cleavage at a specific serine bond to produce a beta-subunit with a hydroxyl group at its C-terminus and an alpha-subunit with a pyruvoyl group at its N-terminus.

Its subcellular location is the cytoplasm. The enzyme catalyses L-aspartate + H(+) = beta-alanine + CO2. Its pathway is cofactor biosynthesis; (R)-pantothenate biosynthesis; beta-alanine from L-aspartate: step 1/1. Functionally, catalyzes the pyruvoyl-dependent decarboxylation of aspartate to produce beta-alanine. The polypeptide is Aspartate 1-decarboxylase (Wolinella succinogenes (strain ATCC 29543 / DSM 1740 / CCUG 13145 / JCM 31913 / LMG 7466 / NCTC 11488 / FDC 602W) (Vibrio succinogenes)).